We begin with the raw amino-acid sequence, 54 residues long: Ribulose bisphosphate carboxylase large chain (54 aa).

A propeptide spanning residues 1-2 (MS) is cleaved from the precursor. Pro3 carries the N-acetylproline modification. Residue Lys14 is modified to N6,N6,N6-trimethyllysine.

The protein belongs to the RuBisCO large chain family. Type I subfamily. Heterohexadecamer of 8 large chains and 8 small chains.

It localises to the plastid. The protein localises to the chloroplast. The catalysed reaction is 2 (2R)-3-phosphoglycerate + 2 H(+) = D-ribulose 1,5-bisphosphate + CO2 + H2O. The enzyme catalyses D-ribulose 1,5-bisphosphate + O2 = 2-phosphoglycolate + (2R)-3-phosphoglycerate + 2 H(+). Functionally, ruBisCO catalyzes two reactions: the carboxylation of D-ribulose 1,5-bisphosphate, the primary event in carbon dioxide fixation, as well as the oxidative fragmentation of the pentose substrate in the photorespiration process. Both reactions occur simultaneously and in competition at the same active site. This chain is Ribulose bisphosphate carboxylase large chain (rbcL), found in Magnolia liliiflora (Mulan magnolia).